Consider the following 446-residue polypeptide: Bifunctional protein GlmU (446 aa).

Positions 1–228 (MTKTAAVILA…AEELLGVNSR (228 aa)) are pyrophosphorylase. Residues 9–12 (LAAG), K23, Q72, 77–78 (GT), 100–102 (YGD), G140, E154, N169, and N226 contribute to the UDP-N-acetyl-alpha-D-glucosamine site. Residue D102 coordinates Mg(2+). A Mg(2+)-binding site is contributed by N226. The tract at residues 229 to 249 (SELAAAEAVIQGRLREKAMEG) is linker. The N-acetyltransferase stretch occupies residues 250–446 (GATLTAPETV…AHMRRLTGKN (197 aa)). Positions 315 and 333 each coordinate UDP-N-acetyl-alpha-D-glucosamine. The Proton acceptor role is filled by H345. UDP-N-acetyl-alpha-D-glucosamine is bound by residues Y348 and N359. Acetyl-CoA is bound by residues A362, 368 to 369 (NY), S387, A405, and R422.

In the N-terminal section; belongs to the N-acetylglucosamine-1-phosphate uridyltransferase family. The protein in the C-terminal section; belongs to the transferase hexapeptide repeat family. In terms of assembly, homotrimer. Requires Mg(2+) as cofactor.

It is found in the cytoplasm. The enzyme catalyses alpha-D-glucosamine 1-phosphate + acetyl-CoA = N-acetyl-alpha-D-glucosamine 1-phosphate + CoA + H(+). It catalyses the reaction N-acetyl-alpha-D-glucosamine 1-phosphate + UTP + H(+) = UDP-N-acetyl-alpha-D-glucosamine + diphosphate. It functions in the pathway nucleotide-sugar biosynthesis; UDP-N-acetyl-alpha-D-glucosamine biosynthesis; N-acetyl-alpha-D-glucosamine 1-phosphate from alpha-D-glucosamine 6-phosphate (route II): step 2/2. The protein operates within nucleotide-sugar biosynthesis; UDP-N-acetyl-alpha-D-glucosamine biosynthesis; UDP-N-acetyl-alpha-D-glucosamine from N-acetyl-alpha-D-glucosamine 1-phosphate: step 1/1. Its pathway is bacterial outer membrane biogenesis; LPS lipid A biosynthesis. In terms of biological role, catalyzes the last two sequential reactions in the de novo biosynthetic pathway for UDP-N-acetylglucosamine (UDP-GlcNAc). The C-terminal domain catalyzes the transfer of acetyl group from acetyl coenzyme A to glucosamine-1-phosphate (GlcN-1-P) to produce N-acetylglucosamine-1-phosphate (GlcNAc-1-P), which is converted into UDP-GlcNAc by the transfer of uridine 5-monophosphate (from uridine 5-triphosphate), a reaction catalyzed by the N-terminal domain. This chain is Bifunctional protein GlmU, found in Rhodospirillum rubrum (strain ATCC 11170 / ATH 1.1.1 / DSM 467 / LMG 4362 / NCIMB 8255 / S1).